Consider the following 175-residue polypeptide: MSCKLKVKGQYIKDLSFENPNSPQIFLMISKTPPEINISINVSSVSLPVKAQDQSSEQPSDNKVEPLYEVTLQVNAEARVGTTVAFICEIKYCGVFSIESDDVSIEELSQQDIRDVLLISAPTILFPFVRELISRVTSTGGFPPLMLDIVDFRAMYESQMKQGVGQNDNSQDPEK.

It belongs to the SecB family. In terms of assembly, homotetramer, a dimer of dimers. One homotetramer interacts with 1 SecA dimer.

Its subcellular location is the cytoplasm. In terms of biological role, one of the proteins required for the normal export of preproteins out of the cell cytoplasm. It is a molecular chaperone that binds to a subset of precursor proteins, maintaining them in a translocation-competent state. It also specifically binds to its receptor SecA. The polypeptide is Protein-export protein SecB (Ehrlichia chaffeensis (strain ATCC CRL-10679 / Arkansas)).